We begin with the raw amino-acid sequence, 119 residues long: Large ribosomal subunit protein uL24 (119 aa).

It belongs to the universal ribosomal protein uL24 family. As to quaternary structure, part of the 50S ribosomal subunit.

Functionally, one of two assembly initiator proteins, it binds directly to the 5'-end of the 23S rRNA, where it nucleates assembly of the 50S subunit. In terms of biological role, located at the polypeptide exit tunnel on the outside of the subunit. This chain is Large ribosomal subunit protein uL24, found in Methanococcus vannielii.